A 94-amino-acid chain; its full sequence is Large ribosomal subunit protein bL25 (94 aa).

It belongs to the bacterial ribosomal protein bL25 family. In terms of assembly, part of the 50S ribosomal subunit; part of the 5S rRNA/L5/L18/L25 subcomplex. Contacts the 5S rRNA. Binds to the 5S rRNA independently of L5 and L18.

This is one of the proteins that binds to the 5S RNA in the ribosome where it forms part of the central protuberance. The chain is Large ribosomal subunit protein bL25 from Salmonella agona (strain SL483).